Consider the following 537-residue polypeptide: Phosphoenolpyruvate carboxykinase (ATP) (537 aa).

Residues arginine 64, tyrosine 204, and lysine 210 each contribute to the substrate site. ATP is bound by residues lysine 210, histidine 229, and 245–253 (GLSGTGKTT). Residues lysine 210 and histidine 229 each contribute to the Mn(2+) site. Residue aspartate 266 coordinates Mn(2+). ATP is bound by residues glutamate 294, arginine 330, 446–447 (RI), and threonine 452. Arginine 330 contacts substrate.

It belongs to the phosphoenolpyruvate carboxykinase (ATP) family. In terms of assembly, monomer. Mn(2+) serves as cofactor.

The protein resides in the cytoplasm. It carries out the reaction oxaloacetate + ATP = phosphoenolpyruvate + ADP + CO2. It participates in carbohydrate biosynthesis; gluconeogenesis. Its function is as follows. Involved in the gluconeogenesis. Catalyzes the conversion of oxaloacetate (OAA) to phosphoenolpyruvate (PEP) through direct phosphoryl transfer between the nucleoside triphosphate and OAA. This is Phosphoenolpyruvate carboxykinase (ATP) from Aliivibrio fischeri (strain ATCC 700601 / ES114) (Vibrio fischeri).